Reading from the N-terminus, the 363-residue chain is NAD(P)H-quinone oxidoreductase subunit 1, chloroplastic (363 aa).

The next 6 helical transmembrane spans lie at 27–47, 98–118, 127–147, 248–268, 300–320, and 336–356; these read IWLFIPIFTPVSGITIGVLVI, FSIGPSVVVISILLSHLVIPF, LSIGVSLWIAISSIAPIGLLM, YSGIKFGLFYLASYLNLLVSS, VFGTTISIFFTLAKAYLFLFI, and LLNLGWKFLLPIALGNLLLTT.

This sequence belongs to the complex I subunit 1 family. In terms of assembly, NDH is composed of at least 16 different subunits, 5 of which are encoded in the nucleus.

It localises to the plastid. Its subcellular location is the chloroplast thylakoid membrane. It catalyses the reaction a plastoquinone + NADH + (n+1) H(+)(in) = a plastoquinol + NAD(+) + n H(+)(out). The enzyme catalyses a plastoquinone + NADPH + (n+1) H(+)(in) = a plastoquinol + NADP(+) + n H(+)(out). In terms of biological role, NDH shuttles electrons from NAD(P)H:plastoquinone, via FMN and iron-sulfur (Fe-S) centers, to quinones in the photosynthetic chain and possibly in a chloroplast respiratory chain. The immediate electron acceptor for the enzyme in this species is believed to be plastoquinone. Couples the redox reaction to proton translocation, and thus conserves the redox energy in a proton gradient. This chain is NAD(P)H-quinone oxidoreductase subunit 1, chloroplastic, found in Amborella trichopoda.